Consider the following 407-residue polypeptide: ATP-citrate synthase subunit alpha chain protein 1 (407 aa).

3 residues coordinate citrate: asparagine 327, threonine 329, and arginine 360.

Belongs to the succinate/malate CoA ligase beta subunit family. Heterooctamer of 4 alpha and 4 beta chains.

Its subcellular location is the cytoplasm. The protein localises to the cytosol. It carries out the reaction oxaloacetate + acetyl-CoA + ADP + phosphate = citrate + ATP + CoA. In terms of biological role, ATP citrate-lyase is the primary enzyme responsible for the synthesis of cytosolic acetyl-CoA, used for the elongation of fatty acids and biosynthesis of isoprenoids, flavonoids and malonated derivatives. May supply substrate to the cytosolic acetyl-CoA carboxylase, which generates the malonyl-CoA used for the synthesis of a multitude of compounds, including very long chain fatty acids and flavonoids. In contrast to all known animal ACL enzymes having a homomeric structure, plant ACLs are composed of alpha and beta chains. The sequence is that of ATP-citrate synthase subunit alpha chain protein 1 (ACLA-1) from Oryza sativa subsp. japonica (Rice).